The chain runs to 854 residues: Probable inorganic carbon transporter subunit DabA (854 aa).

Zn(2+) is bound by residues Cys378, Asp380, His560, and Cys575.

Belongs to the inorganic carbon transporter (TC 9.A.2) DabA family. In terms of assembly, forms a complex with DabB. Requires Zn(2+) as cofactor.

The protein resides in the cell membrane. Its function is as follows. Part of an energy-coupled inorganic carbon pump. The polypeptide is Probable inorganic carbon transporter subunit DabA (Bacillus cereus (strain ATCC 14579 / DSM 31 / CCUG 7414 / JCM 2152 / NBRC 15305 / NCIMB 9373 / NCTC 2599 / NRRL B-3711)).